A 206-amino-acid polypeptide reads, in one-letter code: Thymidylate kinase (206 aa).

10-17 (GIDGAGKS) serves as a coordination point for ATP.

Belongs to the thymidylate kinase family.

It catalyses the reaction dTMP + ATP = dTDP + ADP. Its function is as follows. Phosphorylation of dTMP to form dTDP in both de novo and salvage pathways of dTTP synthesis. The chain is Thymidylate kinase from Neisseria gonorrhoeae (strain ATCC 700825 / FA 1090).